We begin with the raw amino-acid sequence, 455 residues long: 3-isopropylmalate dehydratase large subunit (455 aa).

[4Fe-4S] cluster contacts are provided by C337, C397, and C400.

It belongs to the aconitase/IPM isomerase family. LeuC type 1 subfamily. Heterodimer of LeuC and LeuD. [4Fe-4S] cluster serves as cofactor.

The catalysed reaction is (2R,3S)-3-isopropylmalate = (2S)-2-isopropylmalate. It participates in amino-acid biosynthesis; L-leucine biosynthesis; L-leucine from 3-methyl-2-oxobutanoate: step 2/4. Catalyzes the isomerization between 2-isopropylmalate and 3-isopropylmalate, via the formation of 2-isopropylmaleate. The protein is 3-isopropylmalate dehydratase large subunit of Leuconostoc citreum (strain KM20).